A 601-amino-acid polypeptide reads, in one-letter code: uncharacterized protein (601 aa).

Residues 1 to 24 (MKLSSLPSGLGLASLLGLISSATA) form the signal peptide.

It localises to the membrane. This is an uncharacterized protein from Schizosaccharomyces pombe (strain 972 / ATCC 24843) (Fission yeast).